Here is a 746-residue protein sequence, read N- to C-terminus: Probably inactive copalyl diphosphate synthase 3 (746 aa).

The DXDD motif; degenerated motif lies at 331-334 (DVND).

It belongs to the terpene synthase family. Tpsc subfamily. As to expression, mostly expressed in stems, and, at low levels, in roots and leaves, but barely in flowers.

This Isodon rubescens (Rabdosia rubescens) protein is Probably inactive copalyl diphosphate synthase 3.